The sequence spans 116 residues: Cocaine- and amphetamine-regulated transcript protein (116 aa).

A signal peptide spans 1–27 (MESSRVRLLPLLGAALLLMLPLLGTRA). Tyrosine 41 bears the Phosphotyrosine mark. Serine 48 is modified (phosphoserine). 3 disulfides stabilise this stretch: cysteine 82–cysteine 100, cysteine 88–cysteine 108, and cysteine 102–cysteine 115.

The protein belongs to the CART family. Hypothalamus. Found in neurons of the ventrolateral part of the arcuate nucleus, in the external zone of the median eminence, and also found in terminals in the periventricular part of the paraventricular nucleus.

The protein localises to the secreted. Satiety factor closely associated with the actions of leptin and neuropeptide Y; this anorectic peptide inhibits both normal and starvation-induced feeding and completely blocks the feeding response induced by neuropeptide Y and regulated by leptin in the hypothalamus. It promotes neuronal development and survival in vitro. The chain is Cocaine- and amphetamine-regulated transcript protein (CARTPT) from Homo sapiens (Human).